Reading from the N-terminus, the 402-residue chain is MALQAATTTSFLPSALSARKEGAVKDSAFLGVRLGDGLKLETSALGLRTKRVSTSSVAIRAQASAAVSSPTVTPASPSGKQTLRKGTAVITGASSGLGLATAKALAETGRWHVVMGCRDFLKASRAAKAAGMEKGSYTIVHLDLASLDSVRQFVANVRRLEMPVDVVVCNAAVYQPTAKQPSFTADGFEMSVGVNHLGHFLLARELLADLTSSDYPSKRLIIVGSITGNTNTLAGNVPPKANLGDLRGLASGLDGVSSSAMIDGGEFDGAKAYKDSKVCNMLTMQEFHRRYHGETGVTFASLYPGCIATTGLFREHVPLFRLLFPPFQKYITKGYVSEEEAGKRLAQVVSDPSLTKSGVYWSWNNNSASFENQLSEEASDPEKAKKVWELSEKLVGLADHDQ.

Belongs to the short-chain dehydrogenases/reductases (SDR) family. POR subfamily.

The protein resides in the plastid. It localises to the chloroplast. It catalyses the reaction chlorophyllide a + NADP(+) = protochlorophyllide a + NADPH + H(+). The protein operates within porphyrin-containing compound metabolism; chlorophyll biosynthesis. In terms of biological role, phototransformation of protochlorophyllide (Pchlide) to chlorophyllide (Chlide). In Oryza sativa subsp. japonica (Rice), this protein is Protochlorophyllide reductase B, chloroplastic (PORB).